A 198-amino-acid chain; its full sequence is Ribosome maturation factor RimP (198 aa).

Belongs to the RimP family.

It is found in the cytoplasm. Required for maturation of 30S ribosomal subunits. This Agrobacterium fabrum (strain C58 / ATCC 33970) (Agrobacterium tumefaciens (strain C58)) protein is Ribosome maturation factor RimP.